The chain runs to 378 residues: 4-hydroxy-3-methylbut-2-en-1-yl diphosphate synthase (flavodoxin) (378 aa).

Residues Cys-268, Cys-271, Cys-303, and Glu-310 each coordinate [4Fe-4S] cluster. The disordered stretch occupies residues 359–378; that stretch reads AEREKEKEKEKEKEKETQEQ.

The protein belongs to the IspG family. Requires [4Fe-4S] cluster as cofactor.

The catalysed reaction is (2E)-4-hydroxy-3-methylbut-2-enyl diphosphate + oxidized [flavodoxin] + H2O + 2 H(+) = 2-C-methyl-D-erythritol 2,4-cyclic diphosphate + reduced [flavodoxin]. It participates in isoprenoid biosynthesis; isopentenyl diphosphate biosynthesis via DXP pathway; isopentenyl diphosphate from 1-deoxy-D-xylulose 5-phosphate: step 5/6. Functionally, converts 2C-methyl-D-erythritol 2,4-cyclodiphosphate (ME-2,4cPP) into 1-hydroxy-2-methyl-2-(E)-butenyl 4-diphosphate. The protein is 4-hydroxy-3-methylbut-2-en-1-yl diphosphate synthase (flavodoxin) of Bacillus cereus (strain ZK / E33L).